A 335-amino-acid chain; its full sequence is 4-hydroxy-3-methylbut-2-enyl diphosphate reductase (335 aa).

Cys-21 lines the [4Fe-4S] cluster pocket. Residues His-50 and His-86 each coordinate (2E)-4-hydroxy-3-methylbut-2-enyl diphosphate. Residues His-50 and His-86 each contribute to the dimethylallyl diphosphate site. His-50 and His-86 together coordinate isopentenyl diphosphate. A [4Fe-4S] cluster-binding site is contributed by Cys-108. (2E)-4-hydroxy-3-methylbut-2-enyl diphosphate is bound at residue His-136. His-136 is a binding site for dimethylallyl diphosphate. His-136 is a binding site for isopentenyl diphosphate. Glu-138 functions as the Proton donor in the catalytic mechanism. Thr-177 contacts (2E)-4-hydroxy-3-methylbut-2-enyl diphosphate. Position 207 (Cys-207) interacts with [4Fe-4S] cluster. (2E)-4-hydroxy-3-methylbut-2-enyl diphosphate contacts are provided by Ser-235, Ser-236, Asn-237, and Ser-280. The dimethylallyl diphosphate site is built by Ser-235, Ser-236, Asn-237, and Ser-280. 4 residues coordinate isopentenyl diphosphate: Ser-235, Ser-236, Asn-237, and Ser-280.

It belongs to the IspH family. It depends on [4Fe-4S] cluster as a cofactor.

It carries out the reaction isopentenyl diphosphate + 2 oxidized [2Fe-2S]-[ferredoxin] + H2O = (2E)-4-hydroxy-3-methylbut-2-enyl diphosphate + 2 reduced [2Fe-2S]-[ferredoxin] + 2 H(+). The catalysed reaction is dimethylallyl diphosphate + 2 oxidized [2Fe-2S]-[ferredoxin] + H2O = (2E)-4-hydroxy-3-methylbut-2-enyl diphosphate + 2 reduced [2Fe-2S]-[ferredoxin] + 2 H(+). It participates in isoprenoid biosynthesis; dimethylallyl diphosphate biosynthesis; dimethylallyl diphosphate from (2E)-4-hydroxy-3-methylbutenyl diphosphate: step 1/1. It functions in the pathway isoprenoid biosynthesis; isopentenyl diphosphate biosynthesis via DXP pathway; isopentenyl diphosphate from 1-deoxy-D-xylulose 5-phosphate: step 6/6. Catalyzes the conversion of 1-hydroxy-2-methyl-2-(E)-butenyl 4-diphosphate (HMBPP) into a mixture of isopentenyl diphosphate (IPP) and dimethylallyl diphosphate (DMAPP). Acts in the terminal step of the DOXP/MEP pathway for isoprenoid precursor biosynthesis. The chain is 4-hydroxy-3-methylbut-2-enyl diphosphate reductase from Rhizobium rhizogenes (strain K84 / ATCC BAA-868) (Agrobacterium radiobacter).